We begin with the raw amino-acid sequence, 397 residues long: MIIKPRVRGFICVTAHPVGCEANVKEQIDYVTQHGVIEGGPKKVLVLGASTGYGLAARISAAFGCGADTLGVFFEKEGEEGKLSSAGWYNSAAFEKFAVEKGLYAKSINGDAFSDEIKRLTIETIKKDLGKIDLVVYSLAAPRRTDPQGVVHTSTLKPIGKAVTLRGINTDKGVVVDTTLEPATQEEIDGTVKVMGGEDWQLWIDALRDADVLAEGAKTTAFTYLGEKLTQDIYWNGSIGEAKKDLDKKVLTLRDNLAALKGDARVSVLKAVVTQASSAIPIMPLYLSLLFKVMKEQGTHEGCIEQVYGLFKDSLYGSEPKLDADGRLRADLAELEPKVQDAVAALWNQVTDDNVNEISDFAGYKAEFLRLFGFEIDGVDYDADVNPTVKINGLISA.

NAD(+)-binding positions include 48–53 (GASTGY), 74–75 (FE), 111–112 (DA), and 139–140 (LA). Tyr224 provides a ligand contact to substrate. Catalysis depends on Tyr234, which acts as the Proton donor. NAD(+) contacts are provided by residues Lys243 and 272–274 (VVT).

The protein belongs to the TER reductase family. In terms of assembly, monomer.

The enzyme catalyses a 2,3-saturated acyl-[ACP] + NAD(+) = a (2E)-enoyl-[ACP] + NADH + H(+). It participates in lipid metabolism; fatty acid biosynthesis. Involved in the final reduction of the elongation cycle of fatty acid synthesis (FAS II). Catalyzes the reduction of a carbon-carbon double bond in an enoyl moiety that is covalently linked to an acyl carrier protein (ACP). This Pseudomonas fluorescens (strain SBW25) protein is Enoyl-[acyl-carrier-protein] reductase [NADH].